A 160-amino-acid polypeptide reads, in one-letter code: Type IV major fimbrial protein FimA (160 aa).

Residues 1 to 7 constitute a propeptide, leader sequence; the sequence is MKSLQKG. Phe8 bears the N-methylphenylalanine mark. A helical membrane pass occupies residues 8–28; the sequence is FTLIELMIVVAIIGILAAFAI. Cys63 and Cys105 are joined by a disulfide.

It belongs to the N-Me-Phe pilin family. As to quaternary structure, the pili are polar flexible filaments of about 5.4 nanometers diameter and 2.5 micrometers average length; they consist of only a single polypeptide chain arranged in a helical configuration of five subunits per turn in the assembled pilus.

It is found in the fimbrium. Its subcellular location is the membrane. Its function is as follows. Major component of the type IV fimbriae that plays an essential role in twitching motility, natural transformation, and protease secretion. The polypeptide is Type IV major fimbrial protein FimA (fimA) (Dichelobacter nodosus (Bacteroides nodosus)).